Consider the following 327-residue polypeptide: Undecaprenyl-phosphate 4-deoxy-4-formamido-L-arabinose transferase (327 aa).

A run of 2 helical transmembrane segments spans residues 236 to 256 (LSVFGSIIAVLGFTLSVLLVV) and 270 to 290 (VFMLFAVLFMFIGAQFVAMGL).

Belongs to the glycosyltransferase 2 family.

It localises to the cell inner membrane. It carries out the reaction UDP-4-deoxy-4-formamido-beta-L-arabinose + di-trans,octa-cis-undecaprenyl phosphate = 4-deoxy-4-formamido-alpha-L-arabinopyranosyl di-trans,octa-cis-undecaprenyl phosphate + UDP. Its pathway is glycolipid biosynthesis; 4-amino-4-deoxy-alpha-L-arabinose undecaprenyl phosphate biosynthesis; 4-amino-4-deoxy-alpha-L-arabinose undecaprenyl phosphate from UDP-4-deoxy-4-formamido-beta-L-arabinose and undecaprenyl phosphate: step 1/2. It functions in the pathway bacterial outer membrane biogenesis; lipopolysaccharide biosynthesis. Catalyzes the transfer of 4-deoxy-4-formamido-L-arabinose from UDP to undecaprenyl phosphate. The modified arabinose is attached to lipid A and is required for resistance to polymyxin and cationic antimicrobial peptides. In Enterobacter sp. (strain 638), this protein is Undecaprenyl-phosphate 4-deoxy-4-formamido-L-arabinose transferase.